Here is an 86-residue protein sequence, read N- to C-terminus: Defensin-like protein 97 (86 aa).

Positions 1 to 27 are cleaved as a signal peptide; it reads MGSLRVSTFAVAVVVCLSILLMSPTDG. Cystine bridges form between Cys-31-Cys-74, Cys-38-Cys-60, Cys-44-Cys-71, and Cys-48-Cys-73.

This sequence belongs to the DEFL family.

It localises to the secreted. This chain is Defensin-like protein 97 (LCR85), found in Arabidopsis thaliana (Mouse-ear cress).